The sequence spans 101 residues: Small ubiquitin-related modifier 1 (101 aa).

Residue Ser2 is modified to N-acetylserine. Ser2 bears the Phosphoserine mark. Residue Lys7 forms a Glycyl lysine isopeptide (Lys-Gly) (interchain with G-Cter in SUMO1); alternate linkage. A Glycyl lysine isopeptide (Lys-Gly) (interchain with G-Cter in SUMO2); alternate cross-link involves residue Lys7. Residue Ser9 is modified to Phosphoserine. Glycyl lysine isopeptide (Lys-Gly) (interchain with G-Cter in SUMO2) cross-links involve residues Lys16, Lys17, and Lys23. The Ubiquitin-like domain maps to 20–97; it reads EYIKLKVIGQ…IEVYQEQTGG (78 aa). Lys25 is covalently cross-linked (Glycyl lysine isopeptide (Lys-Gly) (interchain with G-Cter in SUMO1)). Ser32 is modified (phosphoserine). Glycyl lysine isopeptide (Lys-Gly) (interchain with G-Cter in SUMO2) cross-links involve residues Lys37, Lys39, Lys45, and Lys46. A Glycyl lysine isopeptide (Gly-Lys) (interchain with K-? in acceptor proteins) cross-link involves residue Gly97. A propeptide spanning residues 98 to 101 is cleaved from the precursor; it reads HSNV.

This sequence belongs to the ubiquitin family. SUMO subfamily. As to quaternary structure, covalently attached to KCNB1; UBE2I increases cross-linking with KCNB1 and PIAS1 decreases cross-links with KCNB1. Interacts with SAE2, RANBP2, PIAS1 and PIAS2. Interacts with PRKN. Covalently attached to a number of proteins such as IKFZ1, PML, RANGAP1, HIPK2, SP100, p53, p73-alpha, MDM2, JUN, DNMT3B and TDG. Also interacts with HIF1A, HIPK2, HIPK3, CHD3, EXOSC9, RAD51 and RAD52. Interacts with USP25 (via ts SIM domain); the interaction weakly sumoylates USP25. Interacts with SIMC1, CASP8AP2, RNF111 and SOBP (via SIM domains). Interacts with BHLHE40/DEC1. Interacts with RWDD3. Interacts with UBE2I/UBC9 and this interaction is enhanced in the presence of RWDD3. Interacts with MTA1. Interacts with SENP2. Interacts with HINT1. Post-translationally, cleavage of precursor form by SENP1 or SENP2 is necessary for function. In terms of processing, polymeric SUMO1 chains undergo polyubiquitination by RNF4.

It is found in the nucleus membrane. The protein localises to the nucleus speckle. Its subcellular location is the cytoplasm. The protein resides in the nucleus. It localises to the PML body. It is found in the cell membrane. Ubiquitin-like protein that can be covalently attached to proteins as a monomer or a lysine-linked polymer. Covalent attachment via an isopeptide bond to its substrates requires prior activation by the E1 complex SAE1-SAE2 and linkage to the E2 enzyme UBE2I, and can be promoted by E3 ligases such as PIAS1-4, RANBP2 or CBX4. This post-translational modification on lysine residues of proteins plays a crucial role in a number of cellular processes such as nuclear transport, DNA replication and repair, mitosis and signal transduction. Involved for instance in targeting RANGAP1 to the nuclear pore complex protein RANBP2. Covalently attached to the voltage-gated potassium channel KCNB1; this modulates the gating characteristics of KCNB1. Polymeric SUMO1 chains are also susceptible to polyubiquitination which functions as a signal for proteasomal degradation of modified proteins. May be involved in modified proteins. May also regulate a network of genes involved in palate development. Covalently attached to ZFHX3. The chain is Small ubiquitin-related modifier 1 (SUMO1) from Ictidomys tridecemlineatus (Thirteen-lined ground squirrel).